A 179-amino-acid polypeptide reads, in one-letter code: MAELATIARPYADALFKASTQQGADLSGTVAWAEELAAIAANPQLRQLADDPKVTDEQLFDVISGVAGSALPDAARNFLRVIIENGRLQALPEVAAQFRSLVNRAGGSSDAVVQSAFPIDAAALAALGTSLEKRFGRKLNLSVQQDQSLIGGIRVVVGDEVLDTSVKARLEQMKAALIA.

It belongs to the ATPase delta chain family. As to quaternary structure, F-type ATPases have 2 components, F(1) - the catalytic core - and F(0) - the membrane proton channel. F(1) has five subunits: alpha(3), beta(3), gamma(1), delta(1), epsilon(1). F(0) has three main subunits: a(1), b(2) and c(10-14). The alpha and beta chains form an alternating ring which encloses part of the gamma chain. F(1) is attached to F(0) by a central stalk formed by the gamma and epsilon chains, while a peripheral stalk is formed by the delta and b chains.

It is found in the cell inner membrane. Its function is as follows. F(1)F(0) ATP synthase produces ATP from ADP in the presence of a proton or sodium gradient. F-type ATPases consist of two structural domains, F(1) containing the extramembraneous catalytic core and F(0) containing the membrane proton channel, linked together by a central stalk and a peripheral stalk. During catalysis, ATP synthesis in the catalytic domain of F(1) is coupled via a rotary mechanism of the central stalk subunits to proton translocation. Functionally, this protein is part of the stalk that links CF(0) to CF(1). It either transmits conformational changes from CF(0) to CF(1) or is implicated in proton conduction. This is ATP synthase subunit delta from Delftia acidovorans (strain DSM 14801 / SPH-1).